The chain runs to 96 residues: MSRVCELSGKAPMTGNTVSHANNKSRRRFLPNLNDVTLISDVLGQSFKLRISAAALRTVDHRGGLDAFLAKARDEELSLKALAIKKEIEKVRATAA.

A disordered region spans residues 1-23 (MSRVCELSGKAPMTGNTVSHANN).

This sequence belongs to the bacterial ribosomal protein bL28 family.

This is Large ribosomal subunit protein bL28 from Cereibacter sphaeroides (strain ATCC 17025 / ATH 2.4.3) (Rhodobacter sphaeroides).